A 279-amino-acid polypeptide reads, in one-letter code: Shikimate dehydrogenase (NADP(+)) (279 aa).

Residues 14–16 (SIS) and Thr-63 contribute to the shikimate site. The active-site Proton acceptor is the Lys-67. An NADP(+)-binding site is contributed by Glu-79. Residues Asn-88 and Asp-103 each contribute to the shikimate site. Residues 127–131 (GAGGA), 151–156 (NRTYEK), and Met-219 each bind NADP(+). Tyr-221 serves as a coordination point for shikimate. An NADP(+)-binding site is contributed by Gly-242.

Belongs to the shikimate dehydrogenase family. In terms of assembly, homodimer.

It carries out the reaction shikimate + NADP(+) = 3-dehydroshikimate + NADPH + H(+). It participates in metabolic intermediate biosynthesis; chorismate biosynthesis; chorismate from D-erythrose 4-phosphate and phosphoenolpyruvate: step 4/7. Involved in the biosynthesis of the chorismate, which leads to the biosynthesis of aromatic amino acids. Catalyzes the reversible NADPH linked reduction of 3-dehydroshikimate (DHSA) to yield shikimate (SA). This Caldicellulosiruptor saccharolyticus (strain ATCC 43494 / DSM 8903 / Tp8T 6331) protein is Shikimate dehydrogenase (NADP(+)).